The following is a 401-amino-acid chain: Mannonate dehydratase (401 aa).

It belongs to the mannonate dehydratase family. Requires Fe(2+) as cofactor. Mn(2+) is required as a cofactor.

The catalysed reaction is D-mannonate = 2-dehydro-3-deoxy-D-gluconate + H2O. The protein operates within carbohydrate metabolism; pentose and glucuronate interconversion. Functionally, catalyzes the dehydration of D-mannonate. The polypeptide is Mannonate dehydratase (Brucella melitensis biotype 2 (strain ATCC 23457)).